We begin with the raw amino-acid sequence, 598 residues long: tRNA(Met) cytidine acetyltransferase TmcA (598 aa).

ATP-binding positions include Gln141, 163-172 (GRGKSTLAGK), and Arg288. Positions 332–490 (TDLRRLFDAD…HSAMMLYPLS (159 aa)) constitute an N-acetyltransferase domain. Residues 411 to 413 (IAV), 418 to 424 (QNQGIGS), and Arg462 each bind acetyl-CoA.

Belongs to the RNA cytidine acetyltransferase family. TmcA subfamily.

It is found in the cytoplasm. It catalyses the reaction cytidine(34) in elongator tRNA(Met) + acetyl-CoA + ATP + H2O = N(4)-acetylcytidine(34) in elongator tRNA(Met) + ADP + phosphate + CoA + H(+). In terms of biological role, catalyzes the formation of N(4)-acetylcytidine (ac(4)C) at the wobble position of tRNA(Met), by using acetyl-CoA as an acetyl donor and ATP (or GTP). This chain is tRNA(Met) cytidine acetyltransferase TmcA, found in Haemophilus ducreyi (strain 35000HP / ATCC 700724).